Here is a 740-residue protein sequence, read N- to C-terminus: MLKYAWQSGPKQSNRWLWHLSNQIWKRSYSSKIRNIGILAHIDAGKTTTTERMLFYAGKTRALGEVHRGNTVTDYLTQERERGITICSSAVTFSWNDHRINLLDTPGHIDFTMEVEQSLYAVDGVVVVLDGTAGVEAQTVTVWSQADKHKLPRLIFVNKMDRPDADFEKCVSDLKDKLETQPVCLQYPVKNEDGVLAINDVITLERLSWQQKDLGRSYRNVKLEPSDDLRLLQEKRNELIDQLSGLDDELADVVISTESFDNVDNALIERALRRATTQQKVVPVLLGSAYKNVGIQRLMDAVNAYLPAPEERNQIYDCFGTEVAGKVFKIVHDKQRGPLTLVRILRGEIKRGMRLISARGQAEVVSKLYEPLADEYREVSAVQSGDVVICAGLKSTVTGDLLTSSQSALKNAQKRYKQSLGNTAAKVEEDDELDESDELFAIDPQIPDAVYFCSIEPPSVSSQTAMEQALKQLQREDPSLRVSYDSVTGQTVLGGMGELHMDIIKSRILSEYKIDVDLGPLQIAYKETIEAPALTTLSVEKEIAGSKQSVSITLEVVKNQAELFSLDKSPDNLPNLNTLRPRILQVLRKGSISALERGPRVGGQVVETQIRLHNATIGRGTADSFVMATAAQCVQKLLSTSGTRLLEPIMALQIVAPSERISGIMADLSRRRALINDVLPKGERNKMILVNAPLAELSGYSSALRTISSGTASMTMQPCGFSSMNSVDESLAERRAQGLE.

Residues 1–29 constitute a mitochondrion transit peptide; the sequence is MLKYAWQSGPKQSNRWLWHLSNQIWKRSY. A tr-type G domain is found at 31 to 310; it reads SKIRNIGILA…AVNAYLPAPE (280 aa). GTP contacts are provided by residues 40–47, 104–108, and 158–161; these read AHIDAGKT, DTPGH, and NKMD.

Belongs to the TRAFAC class translation factor GTPase superfamily. Classic translation factor GTPase family. EF-G/EF-2 subfamily.

It localises to the mitochondrion. In terms of biological role, mitochondrial GTPase that mediates the disassembly of ribosomes from messenger RNA at the termination of mitochondrial protein biosynthesis. Not involved in the GTP-dependent ribosomal translocation step during translation elongation. The sequence is that of Ribosome-releasing factor 2, mitochondrial from Drosophila melanogaster (Fruit fly).